Consider the following 139-residue polypeptide: Thioredoxin-like protein Clot (139 aa).

Residues 1 to 136 (MTVEKVDATV…LADKVDAVVN (136 aa)) enclose the Thioredoxin domain. Residues C49 and C52 each act as nucleophile in the active site. C49 and C52 form a disulfide bridge.

It belongs to the thioredoxin family.

Probable thiol-disulfide oxidoreductase that may participate in various redox reactions. The protein is Thioredoxin-like protein Clot of Oryza sativa subsp. japonica (Rice).